Reading from the N-terminus, the 374-residue chain is Zinc finger CCCH domain-containing protein 15 homolog (374 aa).

The tract at residues 1 to 20 (MPPKQQGPSKKSEQKRKEKV) is disordered. The segment covering 10 to 20 (KKSEQKRKEKV) has biased composition (basic and acidic residues). 2 C3H1-type zinc fingers span residues 90 to 117 (DPKS…HDLA) and 166 to 199 (VCKY…HCLP).

This sequence belongs to the ZC3H15/TMA46 family.

This is Zinc finger CCCH domain-containing protein 15 homolog from Caenorhabditis elegans.